The chain runs to 313 residues: Methionyl-tRNA formyltransferase (313 aa).

Residue 113–116 participates in (6S)-5,6,7,8-tetrahydrofolate binding; that stretch reads SLLP.

It belongs to the Fmt family.

The catalysed reaction is L-methionyl-tRNA(fMet) + (6R)-10-formyltetrahydrofolate = N-formyl-L-methionyl-tRNA(fMet) + (6S)-5,6,7,8-tetrahydrofolate + H(+). Its function is as follows. Attaches a formyl group to the free amino group of methionyl-tRNA(fMet). The formyl group appears to play a dual role in the initiator identity of N-formylmethionyl-tRNA by promoting its recognition by IF2 and preventing the misappropriation of this tRNA by the elongation apparatus. In Acidithiobacillus ferrooxidans (strain ATCC 23270 / DSM 14882 / CIP 104768 / NCIMB 8455) (Ferrobacillus ferrooxidans (strain ATCC 23270)), this protein is Methionyl-tRNA formyltransferase.